The chain runs to 576 residues: Arginine--tRNA ligase (576 aa).

A 'HIGH' region motif is present at residues 128 to 136 (PTGPMHIGH).

The protein belongs to the class-I aminoacyl-tRNA synthetase family. In terms of assembly, monomer.

It is found in the cytoplasm. The catalysed reaction is tRNA(Arg) + L-arginine + ATP = L-arginyl-tRNA(Arg) + AMP + diphosphate. This chain is Arginine--tRNA ligase, found in Rickettsia conorii (strain ATCC VR-613 / Malish 7).